The primary structure comprises 275 residues: MERKEQTMTFYSPEVIKIKGDLRYQRPTLPTNQQSVSTQKRQQYVNEACTYIRMFCGSLSGFSVLLLACTSPLNLVQFLVNNNGLELKAGLWTLCYHELCWSHTPKPPYYLQYSRALFLISILFMLISLGLLLSSCRPAERMMSAELDLKVSMLSFCSAVSLLLCLNLFLAQVELYTKNAMEYEFLWTYYLSWCSEVLYICVGIISFLNFITFQFHPPDEGVSADLWQKSRLGIGPVPKTLSATAERSRSEMQFLSGRQEKLQNVRKGKLATTRL.

4 consecutive transmembrane segments (helical) span residues 60 to 80, 116 to 136, 151 to 171, and 193 to 213; these read SGFS…QFLV, ALFL…LSSC, VSML…LFLA, and WCSE…FITF.

The protein resides in the membrane. The polypeptide is Transmembrane protein 202 (Tmem202) (Mus musculus (Mouse)).